The sequence spans 282 residues: MLLLQIVVLALIQGITEVLPLSSTGHLALLPLLTPWPSPTTWPDQGVALDVAVHLGTLGAVALYFWRDEAAMIGGCLRLLKGKRDPGARLAFLVVLGTLPAVATVLLLAHFAGPIASPGLATIGWTTLGFGLLLGVIDRLCMTVKRVEHMGGIDCLLIGLAQCLALLPGVSRTGVAMTAARLLGYERVESARFSMLLSIPAIAGAATLVGLDLARVGQSAMAPAALIAAVTAFLAAFLAVAAMMAWLRRHGFGPFVAYRVLLGAALLALAYLGPDLAPFLVS.

A run of 8 helical transmembrane segments spans residues 1-21, 46-66, 91-111, 117-137, 150-170, 193-213, 226-246, and 260-280; these read MLLLQIVVLALIQGITEVLPL, GVALDVAVHLGTLGAVALYFW, AFLVVLGTLPAVATVLLLAHF, SPGLATIGWTTLGFGLLLGVI, MGGIDCLLIGLAQCLALLPGV, FSMLLSIPAIAGAATLVGLDL, LIAAVTAFLAAFLAVAAMMAW, and VLLGAALLALAYLGPDLAPFL.

This sequence belongs to the UppP family.

The protein localises to the cell inner membrane. The enzyme catalyses di-trans,octa-cis-undecaprenyl diphosphate + H2O = di-trans,octa-cis-undecaprenyl phosphate + phosphate + H(+). Its function is as follows. Catalyzes the dephosphorylation of undecaprenyl diphosphate (UPP). Confers resistance to bacitracin. The protein is Undecaprenyl-diphosphatase 1 of Rhodospirillum rubrum (strain ATCC 11170 / ATH 1.1.1 / DSM 467 / LMG 4362 / NCIMB 8255 / S1).